A 346-amino-acid chain; its full sequence is Glucose-6-phosphatase 3 (346 aa).

At 1-24 the chain is on the lumenal side; it reads MESTLSAGIIMAEALQNRLPGLEN. A helical transmembrane segment spans residues 25–45; sequence MWLWVTFLGDPKNLFQFCFPA. Residues 46 to 56 are Cytoplasmic-facing; the sequence is AYYASRRLGIS. Residues 57 to 77 form a helical membrane-spanning segment; it reads VLWITFIAEWLNLVFKWFLFG. The Lumenal segment spans residues 78 to 108; it reads DRPFWWVHESGYSTQTPIQIHQFPSSCETGP. Position 79 (R79) interacts with substrate. Residues 109–129 traverse the membrane as a helical segment; that stretch reads GSPSGHCMITGAALWPVMTAI. H114 (proton donor) is an active-site residue. The Cytoplasmic segment spans residues 130–138; sequence SSQVASRSR. Residues 139-159 traverse the membrane as a helical segment; it reads SPWVRVIPGLAYCTFLLAVGL. At 160–167 the chain is on the lumenal side; sequence SRVFLLAH. R161 is a binding site for substrate. Residue H167 is the Nucleophile of the active site. Residues 168–186 traverse the membrane as a helical segment; that stretch reads FPHQVLGGLIVGAALGWLM. Residues 187–197 are Cytoplasmic-facing; sequence SPRVPMERELS. Residues 198 to 218 traverse the membrane as a helical segment; the sequence is FYGLTALALMLGASLMYWTLF. At 219–254 the chain is on the lumenal side; it reads TLGLDLSWSINLASKWCERPEWVHMDSRPFASLSRD. Residues 255-273 form a helical membrane-spanning segment; it reads SGSALGLGIALHTPCYAQI. The Cytoplasmic portion of the chain corresponds to 274–283; the sequence is RRAHLGNGQK. Residues 284–304 traverse the membrane as a helical segment; sequence IACFVLAMGLLVFLEWLGYPP. Topologically, residues 305–307 are lumenal; that stretch reads QIS. Residues 308–328 traverse the membrane as a helical segment; the sequence is LFYIFNFLKYTLWPCLVLALV. The Cytoplasmic portion of the chain corresponds to 329-346; the sequence is PWVVHTLSDQEAPPIRSS.

This sequence belongs to the glucose-6-phosphatase family. In terms of tissue distribution, widely expressed. Highly expressed in heart and testis and to a lower extent in spleen, stomach, small intestine, skeletal muscle and uterus. Expressed in muscle, brain, thymus, lung, kidney, spleen and pancreas (at protein level). In the brain, expressed in astrocytes (at protein level).

The protein localises to the endoplasmic reticulum membrane. The enzyme catalyses D-glucose 6-phosphate + H2O = D-glucose + phosphate. Its pathway is carbohydrate biosynthesis; gluconeogenesis. Its activity is regulated as follows. Inhibited by vanadate. Functionally, hydrolyzes glucose-6-phosphate to glucose in the endoplasmic reticulum. May form with the glucose-6-phosphate transporter (SLC37A4/G6PT) a ubiquitously expressed complex responsible for glucose production through glycogenolysis and gluconeogenesis. Probably required for normal neutrophil function. In Mus musculus (Mouse), this protein is Glucose-6-phosphatase 3 (G6pc3).